Here is a 471-residue protein sequence, read N- to C-terminus: MQVTETLNEGLKREIKVVVPAGDLEAKLAERLETARGRARINGFRPGKVPTAHLRKMYGKSFMAEIVNEILNDSSRSILAERNEKSATQPEVIMSEDEKEAEKVLDGKADFVFSLNYEVLPAIEVKDFSKIAVTREVVDISDEEVDEQVKRIASSTRTFETKKGKAENEDRVTIDYLGKLDGEPFEGGADNDAQLVLGSGQFIPGFEEQLIGLKAGDEKVITVTFPAEYGAAHLAGKEATFDIKVKEVAKPNELVLDDETAKKLGIESLERLRQVVREQIESQYGQITRQKVKRQILDALDGDYQFETPQKLVDAEFNNIWQQINFDLQQAGRTFEDEETTEEAAREEYRKLAERRVRLGLVLSEIGEKAGVEVTEEELQRAVYDQVRRYPGQEKEIYDFLRRTPDAVANLRAPIFEEKVVDHLLANINVTDKKVSKEELTAEDEDAASEAKPAKKAAAKKKAEEGKSEEA.

Positions 169–254 (EDRVTIDYLG…VKEVAKPNEL (86 aa)) constitute a PPIase FKBP-type domain. Residues 435–471 (VSKEELTAEDEDAASEAKPAKKAAAKKKAEEGKSEEA) form a disordered region. A compositionally biased stretch (basic and acidic residues) spans 461–471 (KKAEEGKSEEA).

The protein belongs to the FKBP-type PPIase family. Tig subfamily.

It is found in the cytoplasm. It catalyses the reaction [protein]-peptidylproline (omega=180) = [protein]-peptidylproline (omega=0). Its function is as follows. Involved in protein export. Acts as a chaperone by maintaining the newly synthesized protein in an open conformation. Functions as a peptidyl-prolyl cis-trans isomerase. In Brucella abortus (strain S19), this protein is Trigger factor.